Reading from the N-terminus, the 265-residue chain is MALGRLSSRTLAAMLLALFLGGPALASEIVGGRPARPHAWPFMASLQRRGGHFCGATLIARNFVMSAAHCVNGLNFRSVQVVLGAHDLRRQERTRQTFSVQRIFENGFDPSQLLNDIVIIQLNGSATINANVQVAQLPAQGQGVGDRTPCLAMGWGRLGTNRPSPSVLQELNVTVVTNMCRRRVNVCTLVPRRQAGICFGDSGGPLVCNNLVQGIDSFIRGGCGSGLYPDAFAPVAEFADWINSIIRSHNDHLLTHPKDREGRTN.

The first 26 residues, 1–26 (MALGRLSSRTLAAMLLALFLGGPALA), serve as a signal peptide directing secretion. Residues 29–247 (IVGGRPARPH…FADWINSIIR (219 aa)) enclose the Peptidase S1 domain. An intrachain disulfide couples cysteine 54 to cysteine 70. Residues histidine 69 and aspartate 116 each act as charge relay system in the active site. 2 N-linked (GlcNAc...) asparagine glycosylation sites follow: asparagine 123 and asparagine 172. 3 cysteine pairs are disulfide-bonded: cysteine 150–cysteine 208, cysteine 180–cysteine 187, and cysteine 198–cysteine 223. The active-site Charge relay system is the serine 202.

Belongs to the peptidase S1 family. Elastase subfamily. In terms of assembly, interacts with NOTCH2NL.

The catalysed reaction is Hydrolysis of proteins, including elastin. Preferential cleavage: Val-|-Xaa &gt; Ala-|-Xaa.. Serine protease that modifies the functions of natural killer cells, monocytes and granulocytes. Inhibits C5a-dependent neutrophil enzyme release and chemotaxis. Promotes blood coagulation. Through the activation of the platelet fibrinogen receptor integrin alpha-IIb/beta-3, potentiates platelet aggregation induced by a threshold concentration of cathepsin G (CTSG). Cleaves and thus inactivates tissue factor pathway inhibitor (TFPI). Capable of killing E.coli; probably digests outer membrane protein A (ompA) in E.coli. The chain is Neutrophil elastase (Elane) from Mus musculus (Mouse).